Reading from the N-terminus, the 208-residue chain is RNA-binding protein KhpB (208 aa).

A jag_N domain region spans residues 5-55; the sequence is TAAGRNVDEAVQSGLQELGLTKDKVEITVIEEGNKGFLGIFGKKPAIVKLV. Residues 58–135 form the KH domain; that stretch reads IDPIQQAKLY…GQYKNVTVDA (78 aa). The 69-residue stretch at 140 to 208 folds into the R3H domain; sequence LKRKETLSQL…NRHLVISHKR (69 aa).

It belongs to the KhpB RNA-binding protein family. In terms of assembly, forms a complex with KhpA.

It is found in the cytoplasm. In terms of biological role, a probable RNA chaperone. Forms a complex with KhpA which binds to cellular RNA and controls its expression. Plays a role in peptidoglycan (PG) homeostasis and cell length regulation. The polypeptide is RNA-binding protein KhpB (Bacillus subtilis (strain 168)).